We begin with the raw amino-acid sequence, 842 residues long: Elongation factor 2 (842 aa).

One can recognise a tr-type G domain in the interval 17 to 346; sequence TNVRNMSVIA…MIVMHLPSPV (330 aa). Residues 26 to 33, 158 to 161, and 213 to 215 contribute to the GTP site; these read AHVDHGKS, NKVD, and SGL. At His-699 the chain carries Diphthamide.

It belongs to the TRAFAC class translation factor GTPase superfamily. Classic translation factor GTPase family. EF-G/EF-2 subfamily.

It localises to the cytoplasm. It carries out the reaction GTP + H2O = GDP + phosphate + H(+). Its function is as follows. Catalyzes the GTP-dependent ribosomal translocation step during translation elongation. During this step, the ribosome changes from the pre-translocational (PRE) to the post-translocational (POST) state as the newly formed A-site-bound peptidyl-tRNA and P-site-bound deacylated tRNA move to the P and E sites, respectively. Catalyzes the coordinated movement of the two tRNA molecules, the mRNA and conformational changes in the ribosome. In Candida glabrata (strain ATCC 2001 / BCRC 20586 / JCM 3761 / NBRC 0622 / NRRL Y-65 / CBS 138) (Yeast), this protein is Elongation factor 2 (EFT1).